The following is a 173-amino-acid chain: Protein TraS (173 aa).

It is found in the cell inner membrane. Its function is as follows. Involved in surface exclusion. The protein is Protein TraS (traS) of Escherichia coli (strain K12).